The chain runs to 203 residues: LexA repressor (203 aa).

Positions 30–50 form a DNA-binding region, H-T-H motif; it reads VREICQAVSLKSTSTVHGHLK. Active-site for autocatalytic cleavage activity residues include Ser127 and Lys164.

The protein belongs to the peptidase S24 family. As to quaternary structure, homodimer.

The catalysed reaction is Hydrolysis of Ala-|-Gly bond in repressor LexA.. Represses a number of genes involved in the response to DNA damage (SOS response), including recA and lexA. In the presence of single-stranded DNA, RecA interacts with LexA causing an autocatalytic cleavage which disrupts the DNA-binding part of LexA, leading to derepression of the SOS regulon and eventually DNA repair. This Clostridium perfringens (strain SM101 / Type A) protein is LexA repressor.